Consider the following 337-residue polypeptide: Tetraacyldisaccharide 4'-kinase (337 aa).

55 to 62 (NAGGTGKT) is a binding site for ATP.

It belongs to the LpxK family.

It catalyses the reaction a lipid A disaccharide + ATP = a lipid IVA + ADP + H(+). It participates in glycolipid biosynthesis; lipid IV(A) biosynthesis; lipid IV(A) from (3R)-3-hydroxytetradecanoyl-[acyl-carrier-protein] and UDP-N-acetyl-alpha-D-glucosamine: step 6/6. Transfers the gamma-phosphate of ATP to the 4'-position of a tetraacyldisaccharide 1-phosphate intermediate (termed DS-1-P) to form tetraacyldisaccharide 1,4'-bis-phosphate (lipid IVA). The sequence is that of Tetraacyldisaccharide 4'-kinase from Dinoroseobacter shibae (strain DSM 16493 / NCIMB 14021 / DFL 12).